The primary structure comprises 453 residues: Acyl-coenzyme A thioesterase 2, mitochondrial (453 aa).

The N-terminal 42 residues, 1 to 42 (MVASSFAVLRASRLCQQDWKSWARLFVPPPLSTGGRTTWART), are a transit peptide targeting the mitochondrion. At K83 the chain carries N6-acetyllysine. Catalysis depends on charge relay system residues S273, D365, and H399. K447 is subject to N6-succinyllysine.

The protein belongs to the C/M/P thioester hydrolase family. As to quaternary structure, monomer. Highly expressed in brown and white adipose tissue, muscle, heart, kidney, lung, adrenal gland and spleen; weakly expressed in intestine, testis and brain.

The protein localises to the mitochondrion matrix. The catalysed reaction is hexadecanoyl-CoA + H2O = hexadecanoate + CoA + H(+). The enzyme catalyses tetradecanoyl-CoA + H2O = tetradecanoate + CoA + H(+). It carries out the reaction octadecanoyl-CoA + H2O = octadecanoate + CoA + H(+). It catalyses the reaction eicosanoyl-CoA + H2O = eicosanoate + CoA + H(+). The catalysed reaction is decanoyl-CoA + H2O = decanoate + CoA + H(+). The enzyme catalyses dodecanoyl-CoA + H2O = dodecanoate + CoA + H(+). It carries out the reaction (9Z)-octadecenoyl-CoA + H2O = (9Z)-octadecenoate + CoA + H(+). It catalyses the reaction (9Z)-hexadecenoyl-CoA + H2O = (9Z)-hexadecenoate + CoA + H(+). The catalysed reaction is (9E)-octadecenoyl-CoA + H2O = (9E)-octadecenoate + CoA + H(+). The enzyme catalyses (9Z,12Z)-octadecadienoyl-CoA + H2O = (9Z,12Z)-octadecadienoate + CoA + H(+). It participates in lipid metabolism; fatty acid metabolism. Catalyzes the hydrolysis of acyl-CoAs into free fatty acids and coenzyme A (CoASH), regulating their respective intracellular levels. Displays higher activity toward long chain acyl CoAs (C14-C20). The enzyme is involved in enhancing the hepatic fatty acid oxidation in mitochondria. The polypeptide is Acyl-coenzyme A thioesterase 2, mitochondrial (Acot2) (Mus musculus (Mouse)).